The following is a 206-amino-acid chain: 2,3-bisphosphoglycerate-dependent phosphoglycerate mutase (206 aa).

Substrate is bound by residues 9 to 16 (RHGQSEWN), 22 to 23 (TG), Arg61, 88 to 91 (ERDY), Lys99, 115 to 116 (RR), and 159 to 160 (GN). The Tele-phosphohistidine intermediate role is filled by His10. The active-site Proton donor/acceptor is the Glu88.

It belongs to the phosphoglycerate mutase family. BPG-dependent PGAM subfamily. As to quaternary structure, homodimer.

The enzyme catalyses (2R)-2-phosphoglycerate = (2R)-3-phosphoglycerate. It functions in the pathway carbohydrate degradation; glycolysis; pyruvate from D-glyceraldehyde 3-phosphate: step 3/5. Its function is as follows. Catalyzes the interconversion of 2-phosphoglycerate and 3-phosphoglycerate. In Bartonella quintana (strain Toulouse) (Rochalimaea quintana), this protein is 2,3-bisphosphoglycerate-dependent phosphoglycerate mutase.